The primary structure comprises 330 residues: G-protein coupled receptor 157 (330 aa).

The Extracellular segment spans residues 1 to 15 (MPTPAPPTELLPWER). A helical membrane pass occupies residues 16 to 36 (AVVLLSCVLSALGSGLLVATH). At 37–48 (ALWPDLRSRARR) the chain is on the cytoplasmic side. A helical membrane pass occupies residues 49-69 (LLLFLSLADLLSAASYFYGVL). At 70-87 (QDFAGTSWDCVLQGALST) the chain is on the extracellular side. A helical membrane pass occupies residues 88–108 (FANTSSFFWTVAIALYLYLNI). Topologically, residues 109 to 119 (VRATRGPCTDH) are cytoplasmic. The chain crosses the membrane as a helical span at residues 120–140 (LVWAFHLISWGVPLAITVAAV). Over 141–166 (CLKKIGYDASDVSVGWCWINLEAEDR) the chain is Extracellular. The helical transmembrane segment at 167-187 (VLWMLLTGKLWEMLAYILLPL) threads the bilayer. The Cytoplasmic segment spans residues 188–227 (LYLLVRKHINRAHQALSEYRPIWEGRQLQRGSPTSMADKK). A helical transmembrane segment spans residues 228–250 (LILIPFIFICLRVWSTVRFVLTL). At 251 to 259 (CGSPVVQAP) the chain is on the extracellular side. The helical transmembrane segment at 260 to 282 (VLVVLHGIGNTFQGGANCIMFVL) threads the bilayer. Residues 283-330 (CTRAVRTRLFSLCCCYPRPPTQNPPGASIPPKMGESQESRRTPEVPST) are Cytoplasmic-facing. Residues 303–330 (TQNPPGASIPPKMGESQESRRTPEVPST) form a disordered region. Over residues 317–330 (ESQESRRTPEVPST) the composition is skewed to basic and acidic residues.

Belongs to the G-protein coupled receptor 2 family.

The protein resides in the cell projection. The protein localises to the cilium membrane. Orphan receptor that promotes neuronal differentiation of radial glial progenitors (RGPs). The activity of this receptor is mediated by a G(q)-protein that activates a phosphatidylinositol-calcium second messenger. In Rattus norvegicus (Rat), this protein is G-protein coupled receptor 157 (Gpr157).